The chain runs to 203 residues: UPF0301 protein Sde_3637 (203 aa).

The protein belongs to the UPF0301 (AlgH) family.

This chain is UPF0301 protein Sde_3637, found in Saccharophagus degradans (strain 2-40 / ATCC 43961 / DSM 17024).